Reading from the N-terminus, the 136-residue chain is Transmembrane protein 203 (136 aa).

The interval 1-51 (MLFSLRELVQWLGFATFEIFVHLLALLVFSVLLALRVDGLTPGLSWWNVFV) is interaction with STING1. 4 helical membrane-spanning segments follow: residues 14 to 34 (FATF…VLLA), 50 to 72 (FVPF…VRLF), 81 to 101 (VLRL…EMLL), and 112 to 132 (LWFG…MIRA). A required for lysosomal localization of the STING-TMEM203 complex region spans residues 52 to 136 (PFFAADGLST…LLMIRACRVN (85 aa)).

In terms of assembly, homodimer. Interacts with ATP2A2 and ITPR3. Interacts with STIM1 and STING1 (via transmembrane domain).

Its subcellular location is the endoplasmic reticulum membrane. The protein resides in the endoplasmic reticulum-Golgi intermediate compartment. It is found in the lysosome membrane. In terms of biological role, involved in the regulation of cellular calcium homeotasis. Required for spermatogenesis. Acts as a regulator of STING-mediated inflammatory signaling in macrophages. Forms a complex with STING, promoting the activity of TBK1 kinase and the transcription factor IRF3, leading to activation of type I interferon expression. This Mus musculus (Mouse) protein is Transmembrane protein 203 (Tmem203).